We begin with the raw amino-acid sequence, 430 residues long: Serine--tRNA ligase (430 aa).

An L-serine-binding site is contributed by 237–239; the sequence is TAE. ATP is bound at residue 268 to 270; that stretch reads RAE. Glutamate 291 contributes to the L-serine binding site. An ATP-binding site is contributed by 355 to 358; sequence EVSS. Serine 391 provides a ligand contact to L-serine.

The protein belongs to the class-II aminoacyl-tRNA synthetase family. Type-1 seryl-tRNA synthetase subfamily. In terms of assembly, homodimer. The tRNA molecule binds across the dimer.

The protein resides in the cytoplasm. The enzyme catalyses tRNA(Ser) + L-serine + ATP = L-seryl-tRNA(Ser) + AMP + diphosphate + H(+). It carries out the reaction tRNA(Sec) + L-serine + ATP = L-seryl-tRNA(Sec) + AMP + diphosphate + H(+). It participates in aminoacyl-tRNA biosynthesis; selenocysteinyl-tRNA(Sec) biosynthesis; L-seryl-tRNA(Sec) from L-serine and tRNA(Sec): step 1/1. Its function is as follows. Catalyzes the attachment of serine to tRNA(Ser). Is also able to aminoacylate tRNA(Sec) with serine, to form the misacylated tRNA L-seryl-tRNA(Sec), which will be further converted into selenocysteinyl-tRNA(Sec). This chain is Serine--tRNA ligase, found in Baumannia cicadellinicola subsp. Homalodisca coagulata.